A 1044-amino-acid polypeptide reads, in one-letter code: Elongation factor 3B (1044 aa).

Ser2 carries the post-translational modification N-acetylserine. The HEAT 1 repeat unit spans residues 5 to 42 (QQSITVLEELFRKLETATSETREGISSELSSFLNGNII). ADP contacts are provided by Ile42, His44, and Ser83. 6 HEAT repeats span residues 86–123 (PYIV…AVNP), 124–162 (VAVK…AAKE), 166–203 (LRMP…TVDN), 205–241 (DIER…EVTP), 242–279 (ATLS…LVED), and 285–323 (PFLG…VGNV). N6,N6,N6-trimethyllysine occurs at positions 187 and 196. ADP-binding residues include Thr392, His396, and Glu397. ABC transporter domains follow at residues 426-641 (DEGE…YYEL) and 667-993 (VKVS…KKEE). Position 703 (Asn703) interacts with ADP. Lys789 carries the N6,N6,N6-trimethyllysine modification. 3 residues coordinate ADP: Glu922, Asn925, and His951. Thr972 is modified (phosphothreonine). At Ser974 the chain carries Phosphoserine. The disordered stretch occupies residues 975-1044 (GHNWVAGQGA…DEYVSSDEDF (70 aa)). Basic and acidic residues predominate over residues 987 to 999 (RIEKKEEEGDKFD). Residues 1020–1031 (RKKKKERMKKKK) show a composition bias toward basic residues. Ser1039 and Ser1040 each carry phosphoserine.

It belongs to the ABC transporter superfamily. ABCF family. EF3 subfamily. Monomer.

Its subcellular location is the cytoplasm. It catalyses the reaction ATP + H2O = ADP + phosphate + H(+). The protein operates within protein biosynthesis; polypeptide chain elongation. In terms of biological role, ribosome-dependent ATPase that promotes the translation of proteins required for detoxification of reactive oxygen species. Required for the ATP-dependent release of deacylated tRNA from the ribosomal E-site during protein biosynthesis. Stimulates the eEF1A-dependent binding of aminoacyl-tRNA to the ribosomal A-site, which has reduced affinity for tRNA as long as the E-site is occupied. Assists translation termination by stimulating the release of nascent protein from the ribosome by release factors. The chain is Elongation factor 3B from Saccharomyces cerevisiae (strain ATCC 204508 / S288c) (Baker's yeast).